A 100-amino-acid polypeptide reads, in one-letter code: NADH-quinone oxidoreductase subunit K (100 aa).

Helical transmembrane passes span 4–24 (LSNY…GVLT), 29–49 (IVVF…FVAF), and 60–80 (IFVF…LALF).

It belongs to the complex I subunit 4L family. In terms of assembly, NDH-1 is composed of 14 different subunits. Subunits NuoA, H, J, K, L, M, N constitute the membrane sector of the complex.

The protein resides in the cell inner membrane. It catalyses the reaction a quinone + NADH + 5 H(+)(in) = a quinol + NAD(+) + 4 H(+)(out). NDH-1 shuttles electrons from NADH, via FMN and iron-sulfur (Fe-S) centers, to quinones in the respiratory chain. The immediate electron acceptor for the enzyme in this species is believed to be ubiquinone. Couples the redox reaction to proton translocation (for every two electrons transferred, four hydrogen ions are translocated across the cytoplasmic membrane), and thus conserves the redox energy in a proton gradient. The sequence is that of NADH-quinone oxidoreductase subunit K from Trichlorobacter lovleyi (strain ATCC BAA-1151 / DSM 17278 / SZ) (Geobacter lovleyi).